Reading from the N-terminus, the 429-residue chain is Probable M18 family aminopeptidase 2 (429 aa).

Zn(2+)-binding residues include His82, His156, and His401.

It belongs to the peptidase M18 family. Requires Zn(2+) as cofactor.

The protein is Probable M18 family aminopeptidase 2 of Pseudomonas savastanoi pv. phaseolicola (strain 1448A / Race 6) (Pseudomonas syringae pv. phaseolicola (strain 1448A / Race 6)).